The primary structure comprises 362 residues: Aminomethyltransferase (362 aa).

It belongs to the GcvT family. The glycine cleavage system is composed of four proteins: P, T, L and H.

It catalyses the reaction N(6)-[(R)-S(8)-aminomethyldihydrolipoyl]-L-lysyl-[protein] + (6S)-5,6,7,8-tetrahydrofolate = N(6)-[(R)-dihydrolipoyl]-L-lysyl-[protein] + (6R)-5,10-methylene-5,6,7,8-tetrahydrofolate + NH4(+). In terms of biological role, the glycine cleavage system catalyzes the degradation of glycine. This Chromobacterium violaceum (strain ATCC 12472 / DSM 30191 / JCM 1249 / CCUG 213 / NBRC 12614 / NCIMB 9131 / NCTC 9757 / MK) protein is Aminomethyltransferase.